Reading from the N-terminus, the 400-residue chain is Probable glycosyltransferase WbjE (400 aa).

It belongs to the glycosyltransferase group 1 family. Glycosyltransferase 4 subfamily.

It participates in bacterial outer membrane biogenesis; LPS O-antigen biosynthesis. In Pseudomonas aeruginosa, this protein is Probable glycosyltransferase WbjE (wbjE).